A 196-amino-acid polypeptide reads, in one-letter code: uncharacterized protein (196 aa).

An N-terminal signal peptide occupies residues 1 to 23; it reads MSARAPKELRLALPPCLLNRTFA. N-linked (GlcNAc...) asparagine glycosylation is found at N19 and N26. At 24 to 60 the chain is on the extracellular side; it reads SHNASGGSNAGIRSSGAGGGTCITQVGQQLFQSFSST. A helical membrane pass occupies residues 61–81; that stretch reads LVLIVLVTLIFCLIVLSLSTF. The Cytoplasmic segment spans residues 82-196; that stretch reads HIHKRRMKKR…EGLLQTVVLS (115 aa). The disordered stretch occupies residues 93-184; it reads MQRAQEEYER…AHAASSCLDT (92 aa). Basic and acidic residues-rich tracts occupy residues 95–106 and 124–135; these read RAQEEYERDHCS and HGKETRLERQPR. Over residues 161 to 171 the composition is skewed to pro residues; that stretch reads CAPPPPPPVPS. Low complexity predominate over residues 172–181; sequence PHGAHAASSC.

It localises to the membrane. This is an uncharacterized protein from Rattus norvegicus (Rat).